An 88-amino-acid polypeptide reads, in one-letter code: Small ribosomal subunit protein uS15 (88 aa).

The protein belongs to the universal ribosomal protein uS15 family. Part of the 30S ribosomal subunit. Forms a bridge to the 50S subunit in the 70S ribosome, contacting the 23S rRNA.

Functionally, one of the primary rRNA binding proteins, it binds directly to 16S rRNA where it helps nucleate assembly of the platform of the 30S subunit by binding and bridging several RNA helices of the 16S rRNA. Its function is as follows. Forms an intersubunit bridge (bridge B4) with the 23S rRNA of the 50S subunit in the ribosome. The protein is Small ribosomal subunit protein uS15 of Borreliella afzelii (strain PKo) (Borrelia afzelii).